A 609-amino-acid polypeptide reads, in one-letter code: Replication factor A protein 1 (609 aa).

Residues 130–152 (QNEQNNASAPRTGISTSTNSFYG) show a composition bias toward polar residues. The disordered stretch occupies residues 130 to 166 (QNEQNNASAPRTGISTSTNSFYGNNAAATAPAPPPMM). Positions 192–278 (WTIRARVTNK…NEYELMFERD (87 aa)) form a DNA-binding region, OB. A C4-type zinc finger spans residues 477–498 (CPAADCNKKVFDQGGSWRCEKC).

The protein belongs to the replication factor A protein 1 family. Component of the heterotrimeric canonical replication protein A complex (RPA).

It is found in the nucleus. Functionally, as part of the replication protein A (RPA/RP-A), a single-stranded DNA-binding heterotrimeric complex, may play an essential role in DNA replication, recombination and repair. Binds and stabilizes single-stranded DNA intermediates, preventing complementary DNA reannealing and recruiting different proteins involved in DNA metabolism. This Schizosaccharomyces pombe (strain 972 / ATCC 24843) (Fission yeast) protein is Replication factor A protein 1 (ssb1).